An 882-amino-acid polypeptide reads, in one-letter code: Translation initiation factor IF-2 (882 aa).

3 stretches are compositionally biased toward polar residues: residues Asn-38 to Ser-56, Gly-97 to Asn-124, and Gly-140 to Ser-192. Disordered regions lie at residues Asn-38–Ser-192 and Ser-236–Glu-274. Over residues Glu-243 to Gln-259 the composition is skewed to basic and acidic residues. The tr-type G domain maps to Glu-380 to Ser-553. The segment at Gly-389–Thr-396 is G1. A GTP-binding site is contributed by Gly-389–Thr-396. The segment at Gly-414–His-418 is G2. Residues Asp-435 to Gly-438 are G3. Residues Asp-435 to His-439 and Asn-489 to Asp-492 each bind GTP. Residues Asn-489–Asp-492 are G4. The G5 stretch occupies residues Ser-525–Leu-527.

Belongs to the TRAFAC class translation factor GTPase superfamily. Classic translation factor GTPase family. IF-2 subfamily.

It localises to the cytoplasm. In terms of biological role, one of the essential components for the initiation of protein synthesis. Protects formylmethionyl-tRNA from spontaneous hydrolysis and promotes its binding to the 30S ribosomal subunits. Also involved in the hydrolysis of GTP during the formation of the 70S ribosomal complex. This is Translation initiation factor IF-2 (infB) from Borreliella burgdorferi (strain ATCC 35210 / DSM 4680 / CIP 102532 / B31) (Borrelia burgdorferi).